The following is a 492-amino-acid chain: MSAKSIREYDGKAVLAYWLNRSPSISKEEYKTVSATPAVQLAQIQFPLPTLVIPAESTTYREVVEDVFAKVEQEHPWVKETKLVAKPDQLIKRRGKSGLLKLNATWDEAKEWIRERAGKNQKVQHAVGYLTTFLVEPFVPHPPNTEYYININSVREGDWILFCNEGGVDVGDVDAKARKLLVPVRLSEFPSRATIASTLLSDIPVEQHESLVDFIIRLYSVYVDCQFTYLEINPLVVIPTAKGADVFYLDLAAKLDQTAEFECGAKWAVARAPESLGIKTSGEESGAINADHGPPMVFPAPFGRELSKEEAYVQGLDAKTGASLKLTILNAEGRVWNLVAGGGASVVYADAVAVNGAADELANYGEYSGAPTDGQTYEYAKTVLDLMTRGEPRADGKVLFIGGGIANFTSPAVTFRAIARALGDYKDKLHAHKVSIWVRRAGPNYQEGLRVIREAGKKFDLPLKVYGPECHISGIVPMGLGKAPVEAEWQMA.

The residue at position 24 (Ser24) is a Phosphoserine.

In the N-terminal section; belongs to the succinate/malate CoA ligase beta subunit family. It in the C-terminal section; belongs to the succinate/malate CoA ligase alpha subunit family. Composed of two subunits.

Its subcellular location is the cytoplasm. It is found in the nucleus. The catalysed reaction is oxaloacetate + acetyl-CoA + ADP + phosphate = citrate + ATP + CoA. ATP citrate-lyase is the primary enzyme responsible for the synthesis of cytosolic acetyl-CoA. Has a central role in de novo lipid synthesis. The protein is Probable ATP-citrate synthase subunit 2 of Schizosaccharomyces pombe (strain 972 / ATCC 24843) (Fission yeast).